A 248-amino-acid chain; its full sequence is Triosephosphate isomerase (248 aa).

9–11 contacts substrate; the sequence is NWK. Histidine 94 (electrophile) is an active-site residue. The Proton acceptor role is filled by glutamate 166. Residues glycine 172, serine 212, and 233–234 each bind substrate; that span reads GG.

This sequence belongs to the triosephosphate isomerase family. As to quaternary structure, homodimer.

It is found in the cytoplasm. It carries out the reaction D-glyceraldehyde 3-phosphate = dihydroxyacetone phosphate. It functions in the pathway carbohydrate biosynthesis; gluconeogenesis. Its pathway is carbohydrate degradation; glycolysis; D-glyceraldehyde 3-phosphate from glycerone phosphate: step 1/1. Its function is as follows. Involved in the gluconeogenesis. Catalyzes stereospecifically the conversion of dihydroxyacetone phosphate (DHAP) to D-glyceraldehyde-3-phosphate (G3P). The chain is Triosephosphate isomerase from Clostridium botulinum (strain Okra / Type B1).